The following is a 432-amino-acid chain: Adenylosuccinate synthetase (432 aa).

GTP-binding positions include 11–17 (GDEGKGK) and 39–41 (GHT). The active-site Proton acceptor is Asp-12. Residues Asp-12 and Gly-39 each contribute to the Mg(2+) site. IMP-binding positions include 12-15 (DEGK), 37-40 (NAGH), Thr-134, Arg-148, Asn-230, Thr-245, and Arg-309. Catalysis depends on His-40, which acts as the Proton donor. 305–311 (VTTGRKR) is a binding site for substrate. Residues Arg-311, 337–339 (KLD), and 419–421 (GTG) contribute to the GTP site.

This sequence belongs to the adenylosuccinate synthetase family. As to quaternary structure, homodimer. Mg(2+) is required as a cofactor.

It is found in the cytoplasm. It catalyses the reaction IMP + L-aspartate + GTP = N(6)-(1,2-dicarboxyethyl)-AMP + GDP + phosphate + 2 H(+). It participates in purine metabolism; AMP biosynthesis via de novo pathway; AMP from IMP: step 1/2. In terms of biological role, plays an important role in the de novo pathway and in the salvage pathway of purine nucleotide biosynthesis. Catalyzes the first committed step in the biosynthesis of AMP from IMP. This is Adenylosuccinate synthetase from Vanderwaltozyma polyspora (strain ATCC 22028 / DSM 70294 / BCRC 21397 / CBS 2163 / NBRC 10782 / NRRL Y-8283 / UCD 57-17) (Kluyveromyces polysporus).